Consider the following 172-residue polypeptide: Small ribosomal subunit protein uS5 (172 aa).

Residues 11–74 form the S5 DRBM domain; the sequence is LFESVVDIAR…RKAKGAMIRF (64 aa).

The protein belongs to the universal ribosomal protein uS5 family. In terms of assembly, part of the 30S ribosomal subunit. Contacts proteins S4 and S8.

In terms of biological role, with S4 and S12 plays an important role in translational accuracy. Its function is as follows. Located at the back of the 30S subunit body where it stabilizes the conformation of the head with respect to the body. In Neorickettsia sennetsu (strain ATCC VR-367 / Miyayama) (Ehrlichia sennetsu), this protein is Small ribosomal subunit protein uS5.